The primary structure comprises 454 residues: Glutamine synthetase (454 aa).

Positions 25-111 (QGIDFLRLQF…LICDVVDREG (87 aa)) constitute a GS beta-grasp domain. The region spanning 118 to 454 (PRQVLKNVLA…WETDRYLEKF (337 aa)) is the GS catalytic domain. Mg(2+) contacts are provided by glutamate 141 and glutamate 143. Glutamate 193 is a binding site for ATP. Residues glutamate 198 and glutamate 205 each coordinate Mg(2+). L-glutamate-binding positions include 249–250 (NG) and glycine 250. Residue histidine 254 coordinates Mg(2+). Residues 256-258 (HIS) and serine 258 contribute to the ATP site. L-glutamate-binding residues include arginine 308, glutamate 314, and arginine 326. ATP-binding residues include arginine 326 and arginine 331. Glutamate 343 serves as a coordination point for Mg(2+). Residue arginine 345 participates in L-glutamate binding.

The protein belongs to the glutamine synthetase family. As to quaternary structure, oligomer of 12 subunits arranged in the form of two hexagons. In its feedback-inhibited form, interacts with TnrA in order to block its DNA-binding activity. Mg(2+) serves as cofactor.

It is found in the cytoplasm. It catalyses the reaction L-glutamate + NH4(+) + ATP = L-glutamine + ADP + phosphate + H(+). Its activity is regulated as follows. Inhibited by glutamine. Glutamine synthetase (GS) is an unusual multitasking protein that functions as an enzyme, a transcription coregulator, and a chaperone in ammonium assimilation and in the regulation of genes involved in nitrogen metabolism. It catalyzes the ATP-dependent biosynthesis of glutamine from glutamate and ammonia. Feedback-inhibited GlnA also interacts with and regulates the activity of the transcriptional regulator TnrA. During nitrogen limitation, TnrA is in its DNA-binding active state and turns on the transcription of genes required for nitrogen assimilation. Under conditions of nitrogen excess, feedback-inhibited GlnA forms a stable complex with TnrA, which inhibits its DNA-binding activity. In contrast, feedback-inhibited GlnA acts as a chaperone to stabilize the DNA-binding activity of GlnR, which represses the transcription of nitrogen assimilation genes. This is Glutamine synthetase from Halobacterium salinarum (strain ATCC 700922 / JCM 11081 / NRC-1) (Halobacterium halobium).